A 180-amino-acid polypeptide reads, in one-letter code: Small ribosomal subunit protein uS5 (180 aa).

The segment at 1–20 is disordered; the sequence is MAKMQGRMQGKVAPGDDRGD. The S5 DRBM domain maps to 22-85; sequence LKEKMVAINR…DEARRKMIKV (64 aa).

It belongs to the universal ribosomal protein uS5 family. Part of the 30S ribosomal subunit. Contacts proteins S4 and S8.

Functionally, with S4 and S12 plays an important role in translational accuracy. In terms of biological role, located at the back of the 30S subunit body where it stabilizes the conformation of the head with respect to the body. The protein is Small ribosomal subunit protein uS5 of Nitrosospira multiformis (strain ATCC 25196 / NCIMB 11849 / C 71).